A 178-amino-acid polypeptide reads, in one-letter code: Large ribosomal subunit protein uL6 (178 aa).

This sequence belongs to the universal ribosomal protein uL6 family. In terms of assembly, part of the 50S ribosomal subunit.

Functionally, this protein binds to the 23S rRNA, and is important in its secondary structure. It is located near the subunit interface in the base of the L7/L12 stalk, and near the tRNA binding site of the peptidyltransferase center. In Lactococcus lactis subsp. lactis (strain IL1403) (Streptococcus lactis), this protein is Large ribosomal subunit protein uL6.